The chain runs to 122 residues: Large ribosomal subunit protein uL14 (122 aa).

The protein belongs to the universal ribosomal protein uL14 family. As to quaternary structure, part of the 50S ribosomal subunit. Forms a cluster with proteins L3 and L19. In the 70S ribosome, L14 and L19 interact and together make contacts with the 16S rRNA in bridges B5 and B8.

Functionally, binds to 23S rRNA. Forms part of two intersubunit bridges in the 70S ribosome. In Micrococcus luteus (strain ATCC 4698 / DSM 20030 / JCM 1464 / CCM 169 / CCUG 5858 / IAM 1056 / NBRC 3333 / NCIMB 9278 / NCTC 2665 / VKM Ac-2230) (Micrococcus lysodeikticus), this protein is Large ribosomal subunit protein uL14.